A 221-amino-acid polypeptide reads, in one-letter code: Adenylate kinase (221 aa).

10–15 (GAGKGT) provides a ligand contact to ATP. The segment at 30–59 (STGDIFRQNLRDNTELGKLAKEYMDKGLLV) is NMP. AMP contacts are provided by residues threonine 31, arginine 36, 57–59 (LLV), 85–88 (GYPR), and glutamine 92. Positions 126–163 (GRRVCPVCGATYHIKTSPPKVDNVCDKCGSELIQRSDD) are LID. Arginine 127 provides a ligand contact to ATP. Positions 130 and 133 each coordinate Zn(2+). 136 to 137 (TY) lines the ATP pocket. Residues cysteine 150 and cysteine 153 each contribute to the Zn(2+) site. AMP-binding residues include arginine 160 and arginine 171. An ATP-binding site is contributed by lysine 199.

The protein belongs to the adenylate kinase family. In terms of assembly, monomer.

It is found in the cytoplasm. It carries out the reaction AMP + ATP = 2 ADP. It functions in the pathway purine metabolism; AMP biosynthesis via salvage pathway; AMP from ADP: step 1/1. Catalyzes the reversible transfer of the terminal phosphate group between ATP and AMP. Plays an important role in cellular energy homeostasis and in adenine nucleotide metabolism. The sequence is that of Adenylate kinase from Caldanaerobacter subterraneus subsp. tengcongensis (strain DSM 15242 / JCM 11007 / NBRC 100824 / MB4) (Thermoanaerobacter tengcongensis).